The following is a 35-amino-acid chain: Hemocyanin A chain (35 aa).

It belongs to the tyrosinase family. Hemocyanin subfamily. As to expression, hemolymph.

Its subcellular location is the secreted. The protein resides in the extracellular space. Hemocyanins are copper-containing oxygen carriers occurring freely dissolved in the hemolymph of many mollusks and arthropods. The polypeptide is Hemocyanin A chain (Cherax destructor (Common yabby crayfish)).